The chain runs to 364 residues: DNA polymerase IV (364 aa).

In terms of domain architecture, UmuC spans 6–186 (IIHIDMDAFY…LPIESFWGVG (181 aa)). Residues D10 and D104 each contribute to the Mg(2+) site. Residue E105 is part of the active site.

It belongs to the DNA polymerase type-Y family. In terms of assembly, monomer. Mg(2+) serves as cofactor.

It localises to the cytoplasm. The catalysed reaction is DNA(n) + a 2'-deoxyribonucleoside 5'-triphosphate = DNA(n+1) + diphosphate. Poorly processive, error-prone DNA polymerase involved in untargeted mutagenesis. Copies undamaged DNA at stalled replication forks, which arise in vivo from mismatched or misaligned primer ends. These misaligned primers can be extended by PolIV. Exhibits no 3'-5' exonuclease (proofreading) activity. May be involved in translesional synthesis, in conjunction with the beta clamp from PolIII. This chain is DNA polymerase IV, found in Bacteroides fragilis (strain YCH46).